The sequence spans 146 residues: D-aminoacyl-tRNA deacylase (146 aa).

The Gly-cisPro motif, important for rejection of L-amino acids motif lies at Gly137–Pro138.

It belongs to the DTD family. Homodimer.

The protein resides in the cytoplasm. It carries out the reaction glycyl-tRNA(Ala) + H2O = tRNA(Ala) + glycine + H(+). The catalysed reaction is a D-aminoacyl-tRNA + H2O = a tRNA + a D-alpha-amino acid + H(+). Functionally, an aminoacyl-tRNA editing enzyme that deacylates mischarged D-aminoacyl-tRNAs. Also deacylates mischarged glycyl-tRNA(Ala), protecting cells against glycine mischarging by AlaRS. Acts via tRNA-based rather than protein-based catalysis; rejects L-amino acids rather than detecting D-amino acids in the active site. By recycling D-aminoacyl-tRNA to D-amino acids and free tRNA molecules, this enzyme counteracts the toxicity associated with the formation of D-aminoacyl-tRNA entities in vivo and helps enforce protein L-homochirality. This is D-aminoacyl-tRNA deacylase from Shouchella clausii (strain KSM-K16) (Alkalihalobacillus clausii).